A 257-amino-acid polypeptide reads, in one-letter code: Glutamate racemase (257 aa).

Substrate is bound by residues 12-13 and 44-45; these read DS and YG. Residue Cys-75 is the Proton donor/acceptor of the active site. Substrate is bound at residue 76–77; that stretch reads NT. The active-site Proton donor/acceptor is the Cys-185. Position 186–187 (186–187) interacts with substrate; it reads TH.

This sequence belongs to the aspartate/glutamate racemases family.

The enzyme catalyses L-glutamate = D-glutamate. Its pathway is cell wall biogenesis; peptidoglycan biosynthesis. Functionally, provides the (R)-glutamate required for cell wall biosynthesis. The protein is Glutamate racemase of Clostridium botulinum (strain 657 / Type Ba4).